Consider the following 278-residue polypeptide: Thiazole synthase (278 aa).

Lys109 functions as the Schiff-base intermediate with DXP in the catalytic mechanism. 1-deoxy-D-xylulose 5-phosphate contacts are provided by residues Gly170, 197–198 (AG), and 219–220 (NT).

It belongs to the ThiG family. In terms of assembly, homotetramer. Forms heterodimers with either ThiH or ThiS.

The protein localises to the cytoplasm. The catalysed reaction is [ThiS sulfur-carrier protein]-C-terminal-Gly-aminoethanethioate + 2-iminoacetate + 1-deoxy-D-xylulose 5-phosphate = [ThiS sulfur-carrier protein]-C-terminal Gly-Gly + 2-[(2R,5Z)-2-carboxy-4-methylthiazol-5(2H)-ylidene]ethyl phosphate + 2 H2O + H(+). Its pathway is cofactor biosynthesis; thiamine diphosphate biosynthesis. Functionally, catalyzes the rearrangement of 1-deoxy-D-xylulose 5-phosphate (DXP) to produce the thiazole phosphate moiety of thiamine. Sulfur is provided by the thiocarboxylate moiety of the carrier protein ThiS. In vitro, sulfur can be provided by H(2)S. In Cupriavidus pinatubonensis (strain JMP 134 / LMG 1197) (Cupriavidus necator (strain JMP 134)), this protein is Thiazole synthase.